A 757-amino-acid chain; its full sequence is Transcription regulator rua1 (757 aa).

5 disordered regions span residues 122–169, 181–218, 237–295, 372–393, and 422–582; these read SSGS…LPVS, NHQVTTQDASVQPKLEKQCQPPSHNVNQQNAFASSNQD, RNTG…NGYT, SADCGLLPRPPSNSPEPHPYPL, and MELQ…IGNA. Over residues 125–165 the composition is skewed to low complexity; it reads SATKSEPSTCSSSTDFSMSSTADASTAPQHSSSGDSSMSSG. 2 stretches are compositionally biased toward polar residues: residues 181–190 and 200–218; these read NHQVTTQDAS and QPPSHNVNQQNAFASSNQD. Positions 240–249 are enriched in basic residues; it reads GHRQHNRHQK. A compositionally biased stretch (polar residues) spans 253 to 277; sequence LPQGQSCTNSGSSSRQVTRPNSPNH. A compositionally biased stretch (pro residues) spans 379–393; that stretch reads PRPPSNSPEPHPYPL. The segment covering 428–437 has biased composition (polar residues); the sequence is PARSNSTFGR. Residues 439 to 453 show a composition bias toward basic residues; it reads SQRHHQPPPSHRQRS. 3 stretches are compositionally biased toward low complexity: residues 454 to 465, 494 to 510, and 543 to 582; these read RTSASSISNTNA, ASQSPSSPSESTAATDA, and TSSSVSALTSTTTTTVSTGASSVASSISGPSSASSGIGNA. A C2H2-type 1 degenerate zinc finger spans residues 661–692; that stretch reads REGWCSLCPQGEWYSMKRSQYLYHMQFDHGIS. The C2H2-type 2; degenerate zinc-finger motif lies at 717 to 750; the sequence is GLCHHCNKWIPICFGPQRKRDFKAWFKHARKCHR.

Its subcellular location is the nucleus. Its function is as follows. Transcription factor; part of the gene cluster that mediates the biosynthesis of the glycolipid biosurfactant ustilagic acid (UA). UA is a secreted cellobiose glycolipid that is toxic for many microorganisms and confers biocontrol activity to U.maydis. Recognizes and binds to the specific 5'-T/G-G/T-C-G-C-A-T-A/T-C/T-C/T-G/A-3' upstream activating sequence found in all promoters of the UA biosynthesis genes. This chain is Transcription regulator rua1, found in Mycosarcoma maydis (Corn smut fungus).